The chain runs to 535 residues: Dual specificity mitogen-activated protein kinase kinase 7 (535 aa).

At alanine 2 the chain carries N-acetylalanine. Residues 2-30 are a coiled coil; sequence AASSLEQKLSRLEAKLKQENREARRRIDL. A d domain region spans residues 37–73; sequence QRPRPIIVITLSPAPAPSQRAALQLPLANDGGSRSPS. The tract at residues 63-93 is disordered; that stretch reads LANDGGSRSPSSESSPQHPTPPTRPRHMLGL. The span at 69-79 shows a compositional bias: low complexity; that stretch reads SRSPSSESSPQ. The Protein kinase domain maps to 136-396; the sequence is LENLGEMGSG…YNKLLEHSFI (261 aa). Residues 142-150 and lysine 165 contribute to the ATP site; that span reads MGSGTCGQV. The active-site Proton acceptor is the aspartate 259. A Phosphoserine; by MAP3K modification is found at serine 287. Phosphothreonine; by MAP3K is present on threonine 291. The DVD domain stretch occupies residues 393-416; that stretch reads HSFIKHYEILEVDVASWFKDVMAK. Serine 427 is modified (phosphoserine).

It belongs to the protein kinase superfamily. STE Ser/Thr protein kinase family. MAP kinase kinase subfamily. Interacts with RASSF7, the interaction promotes phosphorylation. Interacts with VRK2. Interacts (via its D domain) with its substrates MAPK8/JNK1, MAPK9/JNK2 and MAPK10/JNK3. Interacts (via its DVD domain) with MAP3Ks activators like MAP3K5/ASK1 and MAP3K1/MEKK1. Interacts with SH3RF1, MAPK8IP1/JIP1, MAPK8IP2/JIP2 and MAPK8IP3/JIP3 scaffold proteins. Found in a complex with SH3RF1, RAC1, MAP3K11/MLK3, MAPK8IP1/JIP1 and MAPK8/JNK1. Found in a complex with SH3RF1, RAC2, MAP3K7/TAK1, MAPK8IP1/JIP1, MAPK8/JNK1 and MAPK9/JNK2. Mg(2+) serves as cofactor. Post-translationally, activated by phosphorylation on Ser-287 and Thr-291 by MAP kinase kinase kinases (MAP3Ks). In terms of tissue distribution, expressed at high levels in brain, lung, liver, skeletal muscle, kidney, and testis and at lower levels in the heart and spleen.

It is found in the nucleus. The protein localises to the cytoplasm. The catalysed reaction is L-seryl-[protein] + ATP = O-phospho-L-seryl-[protein] + ADP + H(+). The enzyme catalyses L-threonyl-[protein] + ATP = O-phospho-L-threonyl-[protein] + ADP + H(+). It carries out the reaction L-tyrosyl-[protein] + ATP = O-phospho-L-tyrosyl-[protein] + ADP + H(+). Activated by phosphorylation by specific MAP kinase kinase kinases such as MAP3K1/MEKK1, MAP3K3/MEKK3, MAP3K11/MLK3 and MAP3K12/DLK. Isoforms 3 and 4 have lower basal activity but a higher level of inducible activation, than isoforms 2, 6, 7 and 8. Dual specificity protein kinase which acts as an essential component of the MAP kinase signal transduction pathway. Essential component of the stress-activated protein kinase/c-Jun N-terminal kinase (SAP/JNK) signaling pathway. With MAP2K4/MKK4, is the one of the only known kinase to directly activate the stress-activated protein kinase/c-Jun N-terminal kinases MAPK8/JNK1, MAPK9/JNK2 and MAPK10/JNK3. MAP2K4/MKK4 and MAP2K7/MKK7 both activate the JNKs by phosphorylation, but they differ in their preference for the phosphorylation site in the Thr-Pro-Tyr motif. MAP2K4/MKK4 shows preference for phosphorylation of the Tyr residue and MAP2K7/MKK7 for the Thr residue. The monophosphorylation of JNKs on the Thr residue is sufficient to increase JNK activity indicating that MAP2K7/MKK7 is important to trigger JNK activity, while the additional phosphorylation of the Tyr residue by MAP2K4/MKK4 ensures optimal JNK activation. Has a specific role in JNK signal transduction pathway activated by pro-inflammatory cytokines. The MKK/JNK signaling pathway is also involved in mitochondrial death signaling pathway, including the release cytochrome c, leading to apoptosis. Part of a non-canonical MAPK signaling pathway, composed of the upstream MAP3K12 kinase and downstream MAP kinases MAPK1/ERK2 and MAPK3/ERK1, that enhances the AP-1-mediated transcription of APP in response to APOE. This is Dual specificity mitogen-activated protein kinase kinase 7 from Mus musculus (Mouse).